Reading from the N-terminus, the 316-residue chain is Methionyl-tRNA formyltransferase (316 aa).

112-115 (SLLP) contacts (6S)-5,6,7,8-tetrahydrofolate.

This sequence belongs to the Fmt family.

The enzyme catalyses L-methionyl-tRNA(fMet) + (6R)-10-formyltetrahydrofolate = N-formyl-L-methionyl-tRNA(fMet) + (6S)-5,6,7,8-tetrahydrofolate + H(+). Functionally, attaches a formyl group to the free amino group of methionyl-tRNA(fMet). The formyl group appears to play a dual role in the initiator identity of N-formylmethionyl-tRNA by promoting its recognition by IF2 and preventing the misappropriation of this tRNA by the elongation apparatus. In Haemophilus ducreyi (strain 35000HP / ATCC 700724), this protein is Methionyl-tRNA formyltransferase.